Reading from the N-terminus, the 325-residue chain is Diacylglycerol acyltransferase/mycolyltransferase Ag85B (325 aa).

Positions 1 to 40 (MTDVSRKIRAWGRRLMIGTAAAVVLPGLVGLAGGAATAGA) are cleaved as a signal peptide. Position 82-83 (82-83 (LR)) interacts with substrate. A fibronectin-binding region spans residues 98–108 (FEWYYQSGLSI). C127 and C132 are oxidised to a cystine. The substrate site is built by S166 and D194. S166 acts as the Nucleophile in catalysis. Residue E270 is part of the active site. Substrate contacts are provided by residues 272–275 (FVRS), K279, and 302–304 (HSW). H302 is an active-site residue.

Belongs to the mycobacterial A85 antigen family.

The protein localises to the secreted. It carries out the reaction 2 alpha,alpha'-trehalose 6-mycolate = alpha,alpha'-trehalose 6,6'-bismycolate + alpha,alpha-trehalose. The enzyme catalyses an acyl-CoA + a 1,2-diacyl-sn-glycerol = a triacyl-sn-glycerol + CoA. Functionally, the antigen 85 proteins (FbpA, FbpB, FbpC) are responsible for the high affinity of mycobacteria for fibronectin, a large adhesive glycoprotein, which facilitates the attachment of M.tuberculosis to murine alveolar macrophages (AMs). They also help to maintain the integrity of the cell wall by catalyzing the transfer of mycolic acids to cell wall arabinogalactan and through the synthesis of alpha,alpha-trehalose dimycolate (TDM, cord factor). They catalyze the transfer of a mycoloyl residue from one molecule of alpha,alpha-trehalose monomycolate (TMM) to another TMM, leading to the formation of TDM. The protein is Diacylglycerol acyltransferase/mycolyltransferase Ag85B (fbpB) of Mycobacterium tuberculosis (strain ATCC 25177 / H37Ra).